The sequence spans 163 residues: Photosystem II extrinsic protein V (163 aa).

The N-terminal stretch at 1-26 is a signal peptide; that stretch reads MLRKLILITVATVFFACQLLVNPVSA. Residues Cys-63, Cys-66, His-67, and His-118 each coordinate heme c.

Belongs to the cytochrome c family. PsbV subfamily. PSII is composed of 1 copy each of membrane proteins PsbA, PsbB, PsbC, PsbD, PsbE, PsbF, PsbH, PsbI, PsbJ, PsbK, PsbL, PsbM, PsbT, PsbX, PsbY, PsbZ, Psb30/Ycf12, peripheral proteins PsbO, CyanoQ (PsbQ), PsbU, PsbV and a large number of cofactors. It forms dimeric complexes. Heme c is required as a cofactor.

The protein resides in the cellular thylakoid membrane. In terms of biological role, one of the extrinsic, lumenal subunits of photosystem II (PSII). PSII is a light-driven water plastoquinone oxidoreductase, using light energy to abstract electrons from H(2)O, generating a proton gradient subsequently used for ATP formation. The extrinsic proteins stabilize the structure of photosystem II oxygen-evolving complex (OEC), the ion environment of oxygen evolution and protect the OEC against heat-induced inactivation. Low-potential cytochrome c that plays a role in the OEC of PSII. This is Photosystem II extrinsic protein V from Aphanothece halophytica.